Consider the following 236-residue polypeptide: Small ribosomal subunit protein uS2c (236 aa).

The protein belongs to the universal ribosomal protein uS2 family.

Its subcellular location is the plastid. The protein resides in the chloroplast. In Guizotia abyssinica (Niger), this protein is Small ribosomal subunit protein uS2c (rps2).